The following is a 663-amino-acid chain: Polyunsaturated fatty acid lipoxygenase ALOX15 (663 aa).

Positions 2 to 115 (GVYRIRVSTG…ILSLPEGTGC (114 aa)) constitute a PLAT domain. A Lipoxygenase domain is found at 116–663 (TVVEDSQGLF…PSMVENSVAI (548 aa)). Phosphoserine is present on Ser-149. Fe cation-binding residues include His-361, His-366, His-541, His-545, and Ile-663.

It belongs to the lipoxygenase family. As to quaternary structure, interacts with PEBP1; in response to IL13/interleukin-13, prevents the interaction of PEBP1 with RAF1 to activate the ERK signaling cascade. Fe cation serves as cofactor. As to expression, detected in leukocytes, lung and aorta.

It is found in the cytoplasm. Its subcellular location is the cytosol. It localises to the cell membrane. The protein resides in the lipid droplet. The enzyme catalyses (5Z,8Z,11Z,14Z)-eicosatetraenoate + O2 = (12S)-hydroperoxy-(5Z,8Z,10E,14Z)-eicosatetraenoate. The catalysed reaction is (5Z,8Z,11Z,14Z)-eicosatetraenoate + O2 = (15S)-hydroperoxy-(5Z,8Z,11Z,13E)-eicosatetraenoate. It catalyses the reaction (9Z,12Z)-octadecadienoate + O2 = (13S)-hydroperoxy-(9Z,11E)-octadecadienoate. It carries out the reaction (12S)-hydroperoxy-(5Z,8Z,10E,14Z)-eicosatetraenoate = (8S)-hydroxy-(11S,12S)-epoxy-(5Z,9E,14Z)-eicosatrienoate. The enzyme catalyses (5Z,8Z,11Z,14Z)-eicosatetraenoate + 2 O2 = (14R,15S)-dihydroperoxy-(5Z,8Z,10E,12E)-eicosatetraenoate. The catalysed reaction is (5Z,8Z,11Z,14Z)-eicosatetraenoate + 2 O2 = (8S,15S)-dihydroperoxy-(5Z,9E,11Z,13E)-eicosatetraenoate. It catalyses the reaction (14S,15R)-epoxy-(5Z,8Z,11Z)-eicosatrienoate + O2 = (8S)-hydroperoxy-(14S,15R)-epoxy-(5Z,9E,11Z)-eicosatrienoate. It carries out the reaction (14S,15R)-epoxy-(5Z,8Z,11Z)-eicosatrienoate + O2 = (12S)-hydroperoxy-(14S,15R)-epoxy-(5Z,8Z,10E)-eicosatrienoate. The enzyme catalyses (14R,15S)-epoxy-(5Z,8Z,11Z)-eicosatrienoate + O2 = (5S)-hydroperoxy-(14R,15S)-epoxy-(6E,8Z,11Z)-eicosatrienoate. The catalysed reaction is (14R,15S)-epoxy-(5Z,8Z,11Z)-eicosatrienoate + O2 = (12S)-hydroperoxy-(14R,15S)-epoxy-(5Z,8Z,10E)-eicosatrienoate. It catalyses the reaction (15R)-hydroperoxy-(5Z,8Z,11Z,13E)-eicosatetraenoate = 15-oxo-(5Z,8Z,11Z,13E)-eicosatetraenoate + H2O. It carries out the reaction (15S)-hydroperoxy-(5Z,8Z,11Z,13E)-eicosatetraenoate = (14S,15S)-epoxy-(5Z,8Z,10E,12E)-eicosatetraenoate + H2O. The enzyme catalyses (4Z,7Z,10Z,13Z,16Z)-docosapentaenoate + O2 = 14-hydroperoxy-(4Z,7Z,10Z,12E,16Z)-docosapentaenoate. The catalysed reaction is (7Z,10Z,13Z,16Z,19Z)-docosapentaenoate + O2 = 14-hydroperoxy-(7Z,10Z,12E,16Z,19Z)-docosapentaenoate. It catalyses the reaction (4Z,7Z,10Z,13Z,16Z,19Z)-docosahexaenoate + O2 = (14S)-hydroperoxy-(4Z,7Z,10Z,12E,16Z,19Z)-docosahexaenoate. It carries out the reaction (4Z,7Z,10Z,13Z,16Z,19Z)-docosahexaenoate + O2 = (17S)-hydroperoxy-(4Z,7Z,10Z,13Z,15E,19Z)-docosahexaenoate. The enzyme catalyses (7S)-hydroperoxy-(4Z,8E,10Z,13Z,16Z,19Z)-docosahexaenoate + O2 = (7S,14S)-dihydroperoxy-(4Z,8E,10Z,12E,16Z,19Z)-docosahexaenoate. The catalysed reaction is (7S)-hydroperoxy-(4Z,8E,10Z,13Z,16Z,19Z)-docosahexaenoate + O2 = (7S,17S)-dihydroperoxy-(4Z,8E,10Z,13Z,15E,19Z)-docosahexaenoate. It catalyses the reaction (4Z,7Z,10Z,13Z,16Z,19Z)-docosahexaenoate + O2 = (11S)-hydroperoxy-(4Z,7Z,9E,13Z,16Z,19Z)-docosahexaenoate. It carries out the reaction N-(5Z,8Z,11Z,14Z)-eicosatetraenoyl-taurine + O2 = N-(12S)-hydroperoxy-(5Z,8Z,10E,14Z)-eicosatetraenoyl-taurine. The enzyme catalyses N-(5Z,8Z,11Z,14Z)-eicosatetraenoyl-gamma-aminobutanoate + O2 = N-(12S)-hydroperoxy-(5Z,8Z,10E,14Z)-eicosatetraenoyl-gamma-aminobutanoate. The catalysed reaction is N-(5Z,8Z,11Z,14Z)-eicosatetraenoyl-glycine + O2 = N-(12S)-hydroperoxy-(5Z,8Z,10E,14Z)-eicosatetraenoyl-glycine. It catalyses the reaction N-(5Z,8Z,11Z,14Z)-eicosatetraenoyl-L-alanine + O2 = N-(12S)-hydroperoxy-(5Z,8Z,10E,14Z)-eicosatetraenoyl-alanine. It carries out the reaction N-(5Z,8Z,11Z,14Z)-eicosatetraenoyl-taurine + O2 = N-(15S)-hydroperoxy-(5Z,8Z,11Z,13E)-eicosatetraenoyl-taurine. The enzyme catalyses N-(5Z,8Z,11Z,14Z)-eicosatetraenoyl-gamma-aminobutanoate + O2 = N-(15S)-hydroperoxy-(5Z,8Z,11Z,13E)-eicosatetraenoyl-gamma-aminobutanoate. The catalysed reaction is N-(5Z,8Z,11Z,14Z)-eicosatetraenoyl-glycine + O2 = N-(15S)-hydroperoxy-(5Z,8Z,11Z,13E)-eicosatetraenoyl-glycine. It catalyses the reaction N-(5Z,8Z,11Z,14Z)-eicosatetraenoyl-L-alanine + O2 = N-(15S)-hydroperoxy-(5Z,8Z,11Z,13E)-eicosatetraenoyl-alanine. It functions in the pathway lipid metabolism; hydroperoxy eicosatetraenoic acid biosynthesis. Functionally, non-heme iron-containing dioxygenase that catalyzes the stereo-specific peroxidation of free and esterified polyunsaturated fatty acids generating a spectrum of bioactive lipid mediators. It inserts peroxyl groups at C12 or C15 of arachidonate ((5Z,8Z,11Z,14Z)-eicosatetraenoate) producing both 12-hydroperoxyeicosatetraenoate/12-HPETE and 15-hydroperoxyeicosatetraenoate/15-HPETE. It may then act on 12-HPETE to produce hepoxilins, which may show pro-inflammatory properties. Can also peroxidize linoleate ((9Z,12Z)-octadecadienoate) to 13-hydroperoxyoctadecadienoate. May participate in the sequential oxidations of DHA ((4Z,7Z,10Z,13Z,16Z,19Z)-docosahexaenoate) to generate specialized pro-resolving mediators (SPMs)like resolvin D5 ((7S,17S)-diHPDHA) and (7S,14S)-diHPDHA, that actively down-regulate the immune response and have anti-aggregation properties with platelets. Can convert epoxy fatty acids to hydroperoxy-epoxides derivatives followed by an intramolecular nucleophilic substitution leading to the formation of monocyclic endoperoxides. Plays an important role during the maintenance of self-tolerance by peroxidizing membrane-bound phosphatidylethanolamine which can then signal the sorting process for clearance of apoptotic cells during inflammation and prevent an autoimmune response. In addition to its role in the immune and inflammatory responses, this enzyme may play a role in epithelial wound healing in the cornea through production of lipoxin A4 (LXA(4)) and docosahexaenoic acid-derived neuroprotectin D1 (NPD1; 10R,17S-HDHA), both lipid autacoids exhibit anti-inflammatory and neuroprotective properties. Furthermore, it may regulate actin polymerization which is crucial for several biological processes such as the phagocytosis of apoptotic cells. It is also implicated in the generation of endogenous ligands for peroxisome proliferator activated receptor (PPAR-gamma), hence modulating macrophage development and function. It may also exert a negative effect on skeletal development by regulating bone mass through this pathway. As well as participates in ER stress and downstream inflammation in adipocytes, pancreatic islets, and liver. Finally, it is also involved in the cellular response to IL13/interleukin-13. This Rattus norvegicus (Rat) protein is Polyunsaturated fatty acid lipoxygenase ALOX15.